The sequence spans 426 residues: Serine--tRNA ligase (426 aa).

L-serine is bound at residue 233–235; it reads TAE. 264–266 contacts ATP; sequence RSE. Residue E287 participates in L-serine binding. Position 351 to 354 (351 to 354) interacts with ATP; that stretch reads EISS. S387 is an L-serine binding site.

It belongs to the class-II aminoacyl-tRNA synthetase family. Type-1 seryl-tRNA synthetase subfamily. Homodimer. The tRNA molecule binds across the dimer.

The protein resides in the cytoplasm. The catalysed reaction is tRNA(Ser) + L-serine + ATP = L-seryl-tRNA(Ser) + AMP + diphosphate + H(+). The enzyme catalyses tRNA(Sec) + L-serine + ATP = L-seryl-tRNA(Sec) + AMP + diphosphate + H(+). Its pathway is aminoacyl-tRNA biosynthesis; selenocysteinyl-tRNA(Sec) biosynthesis; L-seryl-tRNA(Sec) from L-serine and tRNA(Sec): step 1/1. Functionally, catalyzes the attachment of serine to tRNA(Ser). Is also able to aminoacylate tRNA(Sec) with serine, to form the misacylated tRNA L-seryl-tRNA(Sec), which will be further converted into selenocysteinyl-tRNA(Sec). The sequence is that of Serine--tRNA ligase from Clostridium botulinum (strain Hall / ATCC 3502 / NCTC 13319 / Type A).